We begin with the raw amino-acid sequence, 359 residues long: Chorismate synthase (359 aa).

Arginine 47 is a binding site for NADP(+). Residues 123–125, glycine 283, 298–302, and arginine 326 each bind FMN; these read RSS and KPTSS.

The protein belongs to the chorismate synthase family. As to quaternary structure, homotetramer. FMNH2 serves as cofactor.

The catalysed reaction is 5-O-(1-carboxyvinyl)-3-phosphoshikimate = chorismate + phosphate. It functions in the pathway metabolic intermediate biosynthesis; chorismate biosynthesis; chorismate from D-erythrose 4-phosphate and phosphoenolpyruvate: step 7/7. In terms of biological role, catalyzes the anti-1,4-elimination of the C-3 phosphate and the C-6 proR hydrogen from 5-enolpyruvylshikimate-3-phosphate (EPSP) to yield chorismate, which is the branch point compound that serves as the starting substrate for the three terminal pathways of aromatic amino acid biosynthesis. This reaction introduces a second double bond into the aromatic ring system. The polypeptide is Chorismate synthase (Chlamydia abortus (strain DSM 27085 / S26/3) (Chlamydophila abortus)).